The following is a 436-amino-acid chain: MAKNVVVVGTQWGDEGKGKIVDWLTDHARGVVRFQGGHNAGHTLVIGANEYKLNLVPSGIVREGVACYIGNGVVLDAHHLLSEIRTLEAGGIRVRDRLRISPGCPLILGYHAALDRAREAAKSAGDKIGTTGKGIGPTYEDKVARRALRVYDLFDRERFAAKLRANLDYHNFVLTQHLGAEAVEFGSVFEQAMADAEEIRPMVADVSAELYAVNKSGGSLLFEGAQGTLLDIDHGTYPFVTSSNCVAGQAAAGSGVGPGRLHYVLGITKAYCTRVGGGPFPTELDIETADTPGQQMSSKGREFGTVTGRKRRCGWLDLGALKRSIIINGVTGLCITKLDVLDGLSELKLCTGYMLDGRRIDLLPMGSEEVTRCEPIFETMAGWSGTTFGAQSWEALPQEARAYLHRIEEICEIAIDVISTGPERDETILRRHPFGA.

GTP is bound by residues 13 to 19 and 41 to 43; these read GDEGKGK and GHT. The active-site Proton acceptor is the Asp-14. Residues Asp-14 and Gly-41 each contribute to the Mg(2+) site. IMP-binding positions include 14–17, 39–42, Thr-131, Arg-145, Gln-226, Thr-241, and Arg-309; these read DEGK and NAGH. The Proton donor role is filled by His-42. 305–311 provides a ligand contact to substrate; it reads TVTGRKR. GTP-binding positions include Arg-311, 337–339, and 419–421; these read KLD and STG.

Belongs to the adenylosuccinate synthetase family. In terms of assembly, homodimer. The cofactor is Mg(2+).

Its subcellular location is the cytoplasm. The catalysed reaction is IMP + L-aspartate + GTP = N(6)-(1,2-dicarboxyethyl)-AMP + GDP + phosphate + 2 H(+). It functions in the pathway purine metabolism; AMP biosynthesis via de novo pathway; AMP from IMP: step 1/2. Its function is as follows. Plays an important role in the de novo pathway of purine nucleotide biosynthesis. Catalyzes the first committed step in the biosynthesis of AMP from IMP. In Aromatoleum aromaticum (strain DSM 19018 / LMG 30748 / EbN1) (Azoarcus sp. (strain EbN1)), this protein is Adenylosuccinate synthetase.